The primary structure comprises 194 residues: Thymidine kinase (194 aa).

ATP is bound by residues 15–22 (GSMFSGKS) and 88–91 (DEVQ). Catalysis depends on Glu-89, which acts as the Proton acceptor. The Zn(2+) site is built by Cys-145, Cys-148, Cys-183, and His-186.

The protein belongs to the thymidine kinase family. Homotetramer.

The protein resides in the cytoplasm. The enzyme catalyses thymidine + ATP = dTMP + ADP + H(+). The polypeptide is Thymidine kinase (Bacillus velezensis (strain DSM 23117 / BGSC 10A6 / LMG 26770 / FZB42) (Bacillus amyloliquefaciens subsp. plantarum)).